Here is a 156-residue protein sequence, read N- to C-terminus: B3 domain-containing protein At5g26805 (156 aa).

The TF-B3 DNA-binding region spans 57-155 (KFQLPMEKIR…MFCFSVLDGR (99 aa)).

The protein resides in the nucleus. This chain is B3 domain-containing protein At5g26805, found in Arabidopsis thaliana (Mouse-ear cress).